The sequence spans 440 residues: 3-phosphoshikimate 1-carboxyvinyltransferase (440 aa).

Positions 26, 27, and 31 each coordinate 3-phosphoshikimate. Residue K26 participates in phosphoenolpyruvate binding. Residues G99 and R127 each contribute to the phosphoenolpyruvate site. 4 residues coordinate 3-phosphoshikimate: S172, Q174, D320, and K347. Q174 serves as a coordination point for phosphoenolpyruvate. D320 (proton acceptor) is an active-site residue. Phosphoenolpyruvate-binding residues include R351 and R392.

This sequence belongs to the EPSP synthase family. Monomer.

The protein resides in the cytoplasm. It catalyses the reaction 3-phosphoshikimate + phosphoenolpyruvate = 5-O-(1-carboxyvinyl)-3-phosphoshikimate + phosphate. The protein operates within metabolic intermediate biosynthesis; chorismate biosynthesis; chorismate from D-erythrose 4-phosphate and phosphoenolpyruvate: step 6/7. Functionally, catalyzes the transfer of the enolpyruvyl moiety of phosphoenolpyruvate (PEP) to the 5-hydroxyl of shikimate-3-phosphate (S3P) to produce enolpyruvyl shikimate-3-phosphate and inorganic phosphate. The protein is 3-phosphoshikimate 1-carboxyvinyltransferase of Xanthomonas oryzae pv. oryzae (strain MAFF 311018).